The sequence spans 970 residues: MATCIGEKIEDFKVGNLLGKGSFAGVYRAESIHTGLEVAIKMIDKKAMYKAGMVQRVQNEVKIHCQLKHPSILELYNYFEDSNYVYLVLEMCHNGEMNRYLKNRVKPFSENEARHFMHQIITGMLYLHSHGILHRDLTLSNLLLTRNMNIKIADFGLATQLKMPHEKHYTLCGTPNYISPEIATRSAHGLESDVWSLGCMFYTLLIGRPPFDTDTVKNTLNKVVLADYEMPTFLSMEAKDLIHQLLRRNPADRLSLSSVLDHPFMSQNSSTKSKDLGTVEDSIDSGHATLSTAITASSSTSISGSLFDKRRLLIGQPLPNKMTVFPKNKSSSDFSSSGDGNSFYTQWGNQETSNSGRGRVIQDAEERPHSRYLRRAYSSDRSGTFNSPSQAKTYTMERCHSAEMLSMSKRSGGGENEERYSPTDNNANIFNFFKEKTSSSSGSFERPDNNQTLSNHLCPGKTPFPFADPTPQTETVQQWFGNLQINAHLRKTTEYDSISPTRDFQGHPDLQKDTSKNAWTDTKVKKNSDASDNAHSVKQPNTMKYMTALHSKPEIIQQECVFGSDPLSEQSKTRGMEPPLGYQNRTLRSITSPLVAHRLKPIRQKTKKAVVSILDSEEVCVELLKEYASQEYVKEVLQISSDGNMITIYYPNGGRGFPLADRPPSPTDNISRYSFDNLPEKYWRKYQYASRFVQLVRSKSPKITYFTRYAKCILMENSPGADFEVWFYDGVKIHKTEDFIQVIEKTGKSYTLKSESEVNSLKEEIKMYMDHANEGHRICLALESIISEEERKTRSAPFFPIIIGRKPGSTSSPKALSPPPSVDSNYPTRDRASFNRMVMHSAASPTQAPILNPSMVTNEGLGLTTTASGTDISSNSLKDCLPKSAQLLKSVFVKNVGWATQLTSGAVWVQFNDGSQLVVQAGVSSISYTSPNGQTTRYGENEKLPEYIKQKLQCLSSILLMFSNPTPNFH.

One can recognise a Protein kinase domain in the interval 12–265 (FKVGNLLGKG…LSSVLDHPFM (254 aa)). Residues 18 to 26 (LGKGSFAGV) and lysine 41 each bind ATP. Lysine 45 and lysine 46 each carry N6-acetyllysine. Aspartate 136 (proton acceptor) is an active-site residue. The interval 324–373 (VFPKNKSSSDFSSSGDGNSFYTQWGNQETSNSGRGRVIQDAEERPHSRYL) is disordered. A compositionally biased stretch (low complexity) spans 327–343 (KNKSSSDFSSSGDGNSF). Residues 344 to 356 (YTQWGNQETSNSG) show a composition bias toward polar residues. Residues 360-369 (VIQDAEERPH) show a composition bias toward basic and acidic residues. Serine 401 is modified (phosphoserine). The segment at 498–540 (ISPTRDFQGHPDLQKDTSKNAWTDTKVKKNSDASDNAHSVKQP) is disordered. The segment covering 504 to 515 (FQGHPDLQKDTS) has biased composition (basic and acidic residues). Residues 530–540 (ASDNAHSVKQP) are compositionally biased toward polar residues. In terms of domain architecture, Cryptic POLO box 1 (CPB1) spans 586–699 (TLRSITSPLV…SRFVQLVRSK (114 aa)). Serine 665 carries the phosphoserine modification. The region spanning 700-813 (SPKITYFTRY…GRKPGSTSSP (114 aa)) is the Cryptic POLO box 2 (CPB2) domain. The tract at residues 808–829 (GSTSSPKALSPPPSVDSNYPTR) is disordered. Phosphoserine is present on serine 817. Positions 886 to 964 (QLLKSVFVKN…LSSILLMFSN (79 aa)) constitute a POLO box domain.

The protein belongs to the protein kinase superfamily. Ser/Thr protein kinase family. CDC5/Polo subfamily. As to quaternary structure, homodimer. Interacts with CEP152 (via N-terminus). Interacts with CEP78; this interaction may be important for proper PLK4 localization to the centriole and PLK4-induced overduplication of centrioles. Interacts with CEP131. Interacts simultaneously with TENT5C and CEP192. Interacts with TENT5C; this interaction leads to the TENT5C recruitment in the centrosome. Interacts with CEP85; this interaction may be important in cell migration and centriole assembly. In terms of processing, ubiquitinated; leading to its degradation by the proteasome. Deubiquitinated by USP54; leading to PLK4 stabilization. Tyrosine-phosphorylated by TEC. Post-translationally, acetylation by KAT2A and KAT2B impairs kinase activity by shifting the kinase to an inactive conformation.

The protein localises to the cytoplasm. It is found in the cytoskeleton. Its subcellular location is the microtubule organizing center. The protein resides in the centrosome. It localises to the centriole. The protein localises to the nucleus. It is found in the nucleolus. Its subcellular location is the cleavage furrow. The catalysed reaction is L-seryl-[protein] + ATP = O-phospho-L-seryl-[protein] + ADP + H(+). It catalyses the reaction L-threonyl-[protein] + ATP = O-phospho-L-threonyl-[protein] + ADP + H(+). Serine/threonine-protein kinase that plays a central role in centriole duplication. Able to trigger procentriole formation on the surface of the parental centriole cylinder, leading to the recruitment of centriole biogenesis proteins such as SASS6, CPAP, CCP110, CEP135 and gamma-tubulin. When overexpressed, it is able to induce centrosome amplification through the simultaneous generation of multiple procentrioles adjoining each parental centriole during S phase. Phosphorylates 'Ser-151' of FBXW5 during the G1/S transition, leading to inhibit FBXW5 ability to ubiquitinate SASS6. Its central role in centriole replication suggests a possible role in tumorigenesis, centrosome aberrations being frequently observed in tumors. Also involved in deuterosome-mediated centriole amplification in multiciliated that can generate more than 100 centrioles. Also involved in trophoblast differentiation by phosphorylating HAND1, leading to disrupt the interaction between HAND1 and MDFIC and activate HAND1. Phosphorylates CDC25C and CHEK2. Required for the recruitment of STIL to the centriole and for STIL-mediated centriole amplification. Phosphorylates CEP131 and PCM1 which is essential for proper organization and integrity of centriolar satellites. The polypeptide is Serine/threonine-protein kinase PLK4 (Pongo abelii (Sumatran orangutan)).